Consider the following 414-residue polypeptide: Serine hydroxymethyltransferase (414 aa).

(6S)-5,6,7,8-tetrahydrofolate contacts are provided by residues Leu-121 and Gly-125–Leu-127. At Lys-229 the chain carries N6-(pyridoxal phosphate)lysine.

This sequence belongs to the SHMT family. In terms of assembly, homodimer. Requires pyridoxal 5'-phosphate as cofactor.

Its subcellular location is the cytoplasm. The enzyme catalyses (6R)-5,10-methylene-5,6,7,8-tetrahydrofolate + glycine + H2O = (6S)-5,6,7,8-tetrahydrofolate + L-serine. It participates in one-carbon metabolism; tetrahydrofolate interconversion. The protein operates within amino-acid biosynthesis; glycine biosynthesis; glycine from L-serine: step 1/1. Functionally, catalyzes the reversible interconversion of serine and glycine with tetrahydrofolate (THF) serving as the one-carbon carrier. This reaction serves as the major source of one-carbon groups required for the biosynthesis of purines, thymidylate, methionine, and other important biomolecules. Also exhibits THF-independent aldolase activity toward beta-hydroxyamino acids, producing glycine and aldehydes, via a retro-aldol mechanism. The chain is Serine hydroxymethyltransferase from Albidiferax ferrireducens (strain ATCC BAA-621 / DSM 15236 / T118) (Rhodoferax ferrireducens).